Here is a 467-residue protein sequence, read N- to C-terminus: MSFSNLPPSSGRGSHADGASGRSMPPFPGSSSFTANNPSKGIHPNLTLKRSVQSFDESLDNKKPLPFSYASKVKLREKYLIVGFISSGTYGRVYKAKGRDGVGGDFAIKKFKPDKEGEKVEYTGLSQSAIREISLCTELNHPNVVRLVETILEDKCVYMVFEYTEHDLLQIIHHHTQPQRHAIPAPMVKSILFQLLNGLLYLHSQWVMHRDLKPANILVTSKGAVRIGDLGLARVFKKPLNSLFSGDKVVVTIWYRAPELLLGARHYTTAVDLWAVGCIFAELLSLRPIFKGEEAKMDSKKTVPFQRNQMLKIIEILGLPKKEKWPGLSSMPEFPQLQAMAMAPGSGHLHKPSNLEHWYHVCLKSGGYSGSSPAGSPGKEGFDLLSRLLEYDPEKRISAKEALNHPYFTTGTPVAKNCFEGFEGKYPNRRVSQDDNDIRSGSLPGTKRSGLPDDTLTSRAAKRAREM.

2 stretches are compositionally biased toward polar residues: residues 1–12 and 29–39; these read MSFSNLPPSSGR and GSSSFTANNPS. The segment at 1-45 is disordered; sequence MSFSNLPPSSGRGSHADGASGRSMPPFPGSSSFTANNPSKGIHPN. Residues 79–408 enclose the Protein kinase domain; that stretch reads YLIVGFISSG…AKEALNHPYF (330 aa). ATP contacts are provided by residues 85-93 and K109; that span reads ISSGTYGRV. The active-site Proton acceptor is the D211. The disordered stretch occupies residues 426-467; it reads YPNRRVSQDDNDIRSGSLPGTKRSGLPDDTLTSRAAKRAREM.

The protein belongs to the protein kinase superfamily. CMGC Ser/Thr protein kinase family. CDC2/CDKX subfamily. As to quaternary structure, component of the SRB8-11 complex, a regulatory module of the Mediator complex. Requires Mg(2+) as cofactor.

The protein resides in the nucleus. It catalyses the reaction L-seryl-[protein] + ATP = O-phospho-L-seryl-[protein] + ADP + H(+). The enzyme catalyses L-threonyl-[protein] + ATP = O-phospho-L-threonyl-[protein] + ADP + H(+). The catalysed reaction is [DNA-directed RNA polymerase] + ATP = phospho-[DNA-directed RNA polymerase] + ADP + H(+). Functionally, component of the SRB8-11 complex. The SRB8-11 complex is a regulatory module of the Mediator complex which is itself involved in regulation of basal and activated RNA polymerase II-dependent transcription. The SRB8-11 complex may be involved in the transcriptional repression of a subset of genes regulated by Mediator. It may inhibit the association of the Mediator complex with RNA polymerase II to form the holoenzyme complex. The SRB8-11 complex phosphorylates the C-terminal domain (CTD) of the largest subunit of RNA polymerase II. The protein is Serine/threonine-protein kinase SSN3 (SSN3) of Coccidioides immitis (strain RS) (Valley fever fungus).